Reading from the N-terminus, the 558-residue chain is NAD(P)H-quinone oxidoreductase chain 4 (558 aa).

Transmembrane regions (helical) follow at residues 25 to 45 (FPWLSLSILFPIFGSLVVPFI), 56 to 76 (WYALGIALVTFLITVGAYLKG), 111 to 131 (LILLTSFITALAVLAAWPVSF), 133 to 153 (PKLFFFLILAMDGGQIAVFAV), 157 to 177 (LLFFLAWELELLPVYLLLAIW), 189 to 209 (FIIYTAGSSLFILLAALAMGF), 230 to 250 (GFQLLCYGGLLIAFGVKLPVV), 264 to 284 (TAPVHMLLAGILLKMGGYALL), 298 to 318 (FAPLLIVLGVVNIIYAALTSF), 327 to 347 (IAYSSISHMGFVLIGIGSFSS), 353 to 373 (AMLQMVSHGLIGASLFFLVGA), 395 to 417 (IMFALWTTCSLASLALPGMSGFV), 438 to 458 (IVIAGLAAIGVILTPIYLLSM), and 485 to 505 (IYVIGSLLVPIIGIGLYPRIM).

Belongs to the complex I subunit 4 family.

The protein localises to the cellular thylakoid membrane. It carries out the reaction a plastoquinone + NADH + (n+1) H(+)(in) = a plastoquinol + NAD(+) + n H(+)(out). The catalysed reaction is a plastoquinone + NADPH + (n+1) H(+)(in) = a plastoquinol + NADP(+) + n H(+)(out). In terms of biological role, NDH-1 shuttles electrons from NAD(P)H, via FMN and iron-sulfur (Fe-S) centers, to quinones in the respiratory chain. The immediate electron acceptor for the enzyme in this species is believed to be plastoquinone. Couples the redox reaction to proton translocation (for every two electrons transferred, four hydrogen ions are translocated across the cytoplasmic membrane), and thus conserves the redox energy in a proton gradient. The protein is NAD(P)H-quinone oxidoreductase chain 4 of Prochlorococcus marinus (strain MIT 9211).